We begin with the raw amino-acid sequence, 227 residues long: 7-cyano-7-deazaguanine synthase (227 aa).

ATP is bound at residue phenylalanine 16–leucine 26. Zn(2+)-binding residues include cysteine 194, cysteine 202, cysteine 205, and cysteine 208.

Belongs to the QueC family. Requires Zn(2+) as cofactor.

The catalysed reaction is 7-carboxy-7-deazaguanine + NH4(+) + ATP = 7-cyano-7-deazaguanine + ADP + phosphate + H2O + H(+). It participates in purine metabolism; 7-cyano-7-deazaguanine biosynthesis. Catalyzes the ATP-dependent conversion of 7-carboxy-7-deazaguanine (CDG) to 7-cyano-7-deazaguanine (preQ(0)). This is 7-cyano-7-deazaguanine synthase from Haemophilus influenzae (strain PittEE).